A 623-amino-acid chain; its full sequence is MAKIIGIDLGTTNSCVSVMEGGEPVVIPNAEGSRTTPSVVSFQANGERLIGQVAKRQAITNPEKTIISIKRYMGTDHKVNIDSTEYTPQQISAMVLQKLKADAEAYLGEKVTQAVITVPAYFNDSQRQATKDAGKIAGLEVLRIINEPTAASLAYGLDKMDTNEKILVYDLGGGTFDVSILELGDGVFEVKATNGDTKLGGDDFDQKLIDYIAETFKAENGIDLRNDKMAIQRLKEAAEKAKIELSSATQTNINLPFITADATGPKHIDMNLTRAKFNELTHDLVQRTLEPIKKSLEGSGYAMSDIDKIIMVGGSTRIPAVQDAVKDFTGKELSKGVNPDEVVAMGAAIQAGVLTGEVKDVLLLDVTPLTLGIETFGGVSTTLIEKNTTIPTRKSQVFSTAADGQTSVEIHVVQGERSMAADNKTLGRFTLSGIAPAPRGIPQIEVTFDIDANGIVNVSAKDKGTGKEANITITASTNLTDDEIEKAVNEAKKFEAEDKKRKESIEIKNNADQIVYQTEKTLTDLGDKVSAEDKAQIEEKVKAVKDVKDGEDLEAIKKATEDLTQTFYGISSKIYQQANPEGAQGAGFDPNNMGGANAGNASAGNDKKDDNVVDADFKVEDDK.

Residue Thr175 is modified to Phosphothreonine; by autocatalysis. A disordered region spans residues 580–623 (PEGAQGAGFDPNNMGGANAGNASAGNDKKDDNVVDADFKVEDDK). Residues 591 to 604 (NNMGGANAGNASAG) show a composition bias toward low complexity. Residues 605–623 (NDKKDDNVVDADFKVEDDK) are compositionally biased toward basic and acidic residues.

It belongs to the heat shock protein 70 family.

Functionally, acts as a chaperone. The polypeptide is Chaperone protein DnaK (Clostridium botulinum (strain Hall / ATCC 3502 / NCTC 13319 / Type A)).